The following is a 370-amino-acid chain: Queuine tRNA-ribosyltransferase (370 aa).

Residue aspartate 92 is the Proton acceptor of the active site. Residues 92–96 (DSGGF), aspartate 146, glutamine 190, and glycine 217 each bind substrate. The interval 248–254 (GVGTPEN) is RNA binding. Aspartate 267 functions as the Nucleophile in the catalytic mechanism. The Zn(2+) site is built by cysteine 305, cysteine 307, cysteine 310, and histidine 336.

It belongs to the queuine tRNA-ribosyltransferase family. As to quaternary structure, homodimer. Within each dimer, one monomer is responsible for RNA recognition and catalysis, while the other monomer binds to the replacement base PreQ1. It depends on Zn(2+) as a cofactor.

The catalysed reaction is 7-aminomethyl-7-carbaguanine + guanosine(34) in tRNA = 7-aminomethyl-7-carbaguanosine(34) in tRNA + guanine. It functions in the pathway tRNA modification; tRNA-queuosine biosynthesis. Functionally, catalyzes the base-exchange of a guanine (G) residue with the queuine precursor 7-aminomethyl-7-deazaguanine (PreQ1) at position 34 (anticodon wobble position) in tRNAs with GU(N) anticodons (tRNA-Asp, -Asn, -His and -Tyr). Catalysis occurs through a double-displacement mechanism. The nucleophile active site attacks the C1' of nucleotide 34 to detach the guanine base from the RNA, forming a covalent enzyme-RNA intermediate. The proton acceptor active site deprotonates the incoming PreQ1, allowing a nucleophilic attack on the C1' of the ribose to form the product. After dissociation, two additional enzymatic reactions on the tRNA convert PreQ1 to queuine (Q), resulting in the hypermodified nucleoside queuosine (7-(((4,5-cis-dihydroxy-2-cyclopenten-1-yl)amino)methyl)-7-deazaguanosine). The protein is Queuine tRNA-ribosyltransferase of Desulforapulum autotrophicum (strain ATCC 43914 / DSM 3382 / VKM B-1955 / HRM2) (Desulfobacterium autotrophicum).